Consider the following 453-residue polypeptide: MEQQIYLFGLNHKTAGVEVREAFALGERPKLGELLVDGEARVREALVLSTCNRVEVLVVDPVGRDPKAAVLAAWAGQCGQDPALLAPHLYAHQGMAAVDHLFCVASGLDSLVLGEPQILGQLKAAYRHAVASRTAGVIINRLCHKAFSVAKKVRTATGIGASAVSISYAAVELAKRIFGEMAGKKAMLVGAGEMAELAAMHLLTSGVSEILVANRTYARAEELAGRFKGRAVAFEEFVSRLHEVDIVISSTGAPHVVIRAKDVRAVLKARRHKPMFFIDIAVPRDIDPDINSLDNVYLYDIDDLQEVVEENLAQRREEAARARDIIGLQVERFGEWVKSLDVKPTIVDLLDVGASLARQELQKTLRRLGPEVPEETRAALETMALSISRKMLHEPIAFLKRRAKEEHGERFVDLTRRMYNLDREKVPTDAHADRKPPNFAETSDDFDVTDASE.

Residues 50-53 (TCNR), serine 110, 115-117 (EPQ), and glutamine 121 contribute to the substrate site. Cysteine 51 serves as the catalytic Nucleophile. An NADP(+)-binding site is contributed by 190–195 (GAGEMA). Residues 423–436 (REKVPTDAHADRKP) are compositionally biased toward basic and acidic residues. Residues 423-453 (REKVPTDAHADRKPPNFAETSDDFDVTDASE) form a disordered region. Acidic residues predominate over residues 442-453 (TSDDFDVTDASE).

The protein belongs to the glutamyl-tRNA reductase family. In terms of assembly, homodimer.

The catalysed reaction is (S)-4-amino-5-oxopentanoate + tRNA(Glu) + NADP(+) = L-glutamyl-tRNA(Glu) + NADPH + H(+). It participates in porphyrin-containing compound metabolism; protoporphyrin-IX biosynthesis; 5-aminolevulinate from L-glutamyl-tRNA(Glu): step 1/2. In terms of biological role, catalyzes the NADPH-dependent reduction of glutamyl-tRNA(Glu) to glutamate 1-semialdehyde (GSA). This is Glutamyl-tRNA reductase from Solidesulfovibrio magneticus (strain ATCC 700980 / DSM 13731 / RS-1) (Desulfovibrio magneticus).